Here is a 55-residue protein sequence, read N- to C-terminus: ATP synthase F(0) complex subunit 8 (55 aa).

A helical membrane pass occupies residues 9–29 (WFAIMVFSWFVFLIFLPPKIM).

The protein belongs to the ATPase protein 8 family. Component of the ATP synthase complex composed at least of ATP5F1A/subunit alpha, ATP5F1B/subunit beta, ATP5MC1/subunit c (homooctomer), MT-ATP6/subunit a, MT-ATP8/subunit 8, ATP5ME/subunit e, ATP5MF/subunit f, ATP5MG/subunit g, ATP5MK/subunit k, ATP5MJ/subunit j, ATP5F1C/subunit gamma, ATP5F1D/subunit delta, ATP5F1E/subunit epsilon, ATP5PF/subunit F6, ATP5PB/subunit b, ATP5PD/subunit d, ATP5PO/subunit OSCP. ATP synthase complex consists of a soluble F(1) head domain (subunits alpha(3) and beta(3)) - the catalytic core - and a membrane F(0) domain - the membrane proton channel (subunits c, a, 8, e, f, g, k and j). These two domains are linked by a central stalk (subunits gamma, delta, and epsilon) rotating inside the F1 region and a stationary peripheral stalk (subunits F6, b, d, and OSCP).

The protein resides in the mitochondrion membrane. Its function is as follows. Subunit 8, of the mitochondrial membrane ATP synthase complex (F(1)F(0) ATP synthase or Complex V) that produces ATP from ADP in the presence of a proton gradient across the membrane which is generated by electron transport complexes of the respiratory chain. ATP synthase complex consist of a soluble F(1) head domain - the catalytic core - and a membrane F(1) domain - the membrane proton channel. These two domains are linked by a central stalk rotating inside the F(1) region and a stationary peripheral stalk. During catalysis, ATP synthesis in the catalytic domain of F(1) is coupled via a rotary mechanism of the central stalk subunits to proton translocation. In vivo, can only synthesize ATP although its ATP hydrolase activity can be activated artificially in vitro. Part of the complex F(0) domain. The sequence is that of ATP synthase F(0) complex subunit 8 from Tetraodon nigroviridis (Spotted green pufferfish).